The primary structure comprises 313 residues: Porphobilinogen deaminase (313 aa).

Cys242 carries the post-translational modification S-(dipyrrolylmethanemethyl)cysteine.

It belongs to the HMBS family. Monomer. Dipyrromethane serves as cofactor.

It carries out the reaction 4 porphobilinogen + H2O = hydroxymethylbilane + 4 NH4(+). It functions in the pathway porphyrin-containing compound metabolism; protoporphyrin-IX biosynthesis; coproporphyrinogen-III from 5-aminolevulinate: step 2/4. In terms of biological role, tetrapolymerization of the monopyrrole PBG into the hydroxymethylbilane pre-uroporphyrinogen in several discrete steps. The sequence is that of Porphobilinogen deaminase from Klebsiella pneumoniae (strain 342).